The following is a 342-amino-acid chain: Manganese-dependent ADP-ribose/CDP-alcohol diphosphatase (342 aa).

Methionine 1 is subject to N-acetylmethionine. 7 residues coordinate Zn(2+): aspartate 25, glutamine 27, aspartate 74, asparagine 110, histidine 241, histidine 278, and histidine 280.

This sequence belongs to the ADPRibase-Mn family. As to quaternary structure, monomer. Mg(2+) serves as cofactor.

The catalysed reaction is CDP-choline + H2O = phosphocholine + CMP + 2 H(+). It catalyses the reaction ADP-D-ribose + H2O = D-ribose 5-phosphate + AMP + 2 H(+). The enzyme catalyses CDP-glycerol + H2O = sn-glycerol 3-phosphate + CMP + 2 H(+). Hydrolyzes ADP-ribose, IDP-ribose, CDP-glycerol, CDP-choline and CDP-ethanolamine, but not other non-reducing ADP-sugars or CDP-glucose. May be involved in immune cell signaling as suggested by the second-messenger role of ADP-ribose, which activates TRPM2 as a mediator of oxidative/nitrosative stress. The chain is Manganese-dependent ADP-ribose/CDP-alcohol diphosphatase (ADPRM) from Homo sapiens (Human).